We begin with the raw amino-acid sequence, 255 residues long: Imidazole glycerol phosphate synthase subunit HisF (255 aa).

Residues Asp11 and Asp130 contribute to the active site.

It belongs to the HisA/HisF family. As to quaternary structure, heterodimer of HisH and HisF.

It is found in the cytoplasm. The catalysed reaction is 5-[(5-phospho-1-deoxy-D-ribulos-1-ylimino)methylamino]-1-(5-phospho-beta-D-ribosyl)imidazole-4-carboxamide + L-glutamine = D-erythro-1-(imidazol-4-yl)glycerol 3-phosphate + 5-amino-1-(5-phospho-beta-D-ribosyl)imidazole-4-carboxamide + L-glutamate + H(+). Its pathway is amino-acid biosynthesis; L-histidine biosynthesis; L-histidine from 5-phospho-alpha-D-ribose 1-diphosphate: step 5/9. Functionally, IGPS catalyzes the conversion of PRFAR and glutamine to IGP, AICAR and glutamate. The HisF subunit catalyzes the cyclization activity that produces IGP and AICAR from PRFAR using the ammonia provided by the HisH subunit. The chain is Imidazole glycerol phosphate synthase subunit HisF from Syntrophotalea carbinolica (strain DSM 2380 / NBRC 103641 / GraBd1) (Pelobacter carbinolicus).